Consider the following 411-residue polypeptide: MTTPADDQGKSPENPWPVRAVATRVAKYIDRLGMVWIEGQLTELKIRQTTAWMVLRDPAADMSLSVSCPRDLVANAPVPLSEGTQVIVLGKPQFYTRNGSFSLRISEIRAVGIGELLARIDRLRRLLDAEGLFDPRLKRPIPFLPGTIGLITGRASHAERDVMTVAANRWPAVRFAVRNPIVQGPNAVPQIVGALRELDRDPGVDVIVLARGGGSVEDLLPFSDETLCREIASCTTPVVSAVGHEPDNPLCDLVADLRAATPTDAAKRVVPDAAAEQAFVTDLRRRSARALRQWVHREQHHLDQLRSRPVLARPLQAIDARADEVHRAVAAARRDVRRMVTVESERVGHLSARLTALGPAATLARGYAVVQTMPDTNVLRTTADAPAGTRLRIRVADGAITAVSEGTDEAH.

It belongs to the XseA family. As to quaternary structure, heterooligomer composed of large and small subunits.

It localises to the cytoplasm. The catalysed reaction is Exonucleolytic cleavage in either 5'- to 3'- or 3'- to 5'-direction to yield nucleoside 5'-phosphates.. Functionally, bidirectionally degrades single-stranded DNA into large acid-insoluble oligonucleotides, which are then degraded further into small acid-soluble oligonucleotides. This is Exodeoxyribonuclease 7 large subunit from Mycobacterium sp. (strain JLS).